The primary structure comprises 453 residues: Aldehyde dehydrogenase, dimeric NADP-preferring (453 aa).

Serine 2 carries the post-translational modification N-acetylserine. Lysine 178 is modified (N6-acetyllysine). An NAD(+)-binding site is contributed by glycine 188–glycine 193. N6-acetyllysine is present on lysine 194. Residues glutamate 210 and cysteine 244 contribute to the active site.

This sequence belongs to the aldehyde dehydrogenase family. As to quaternary structure, homodimer. High levels in stomach, esophagus and lung; low level in the liver and kidney.

It localises to the cytoplasm. It catalyses the reaction an aldehyde + NAD(+) + H2O = a carboxylate + NADH + 2 H(+). The catalysed reaction is octanal + NAD(+) + H2O = octanoate + NADH + 2 H(+). In terms of biological role, ALDHs play a major role in the detoxification of alcohol-derived acetaldehyde. They are involved in the metabolism of corticosteroids, biogenic amines, neurotransmitters, and lipid peroxidation. Oxidizes medium and long chain aldehydes into non-toxic fatty acids. Preferentially oxidizes aromatic aldehyde substrates. Comprises about 50 percent of corneal epithelial soluble proteins. May play a role in preventing corneal damage caused by ultraviolet light. The chain is Aldehyde dehydrogenase, dimeric NADP-preferring (ALDH3A1) from Homo sapiens (Human).